The sequence spans 380 residues: Putative 8-amino-7-oxononanoate synthase (380 aa).

Substrate is bound at residue R18. 106 to 107 serves as a coordination point for pyridoxal 5'-phosphate; the sequence is GY. H131 provides a ligand contact to substrate. Residues S179, 205–208, and 236–239 contribute to the pyridoxal 5'-phosphate site; these read DEAH and TFGK. K239 carries the N6-(pyridoxal phosphate)lysine modification. T352 provides a ligand contact to substrate.

It belongs to the class-II pyridoxal-phosphate-dependent aminotransferase family. BioF subfamily. As to quaternary structure, homodimer. Requires pyridoxal 5'-phosphate as cofactor.

The catalysed reaction is 6-carboxyhexanoyl-[ACP] + L-alanine + H(+) = (8S)-8-amino-7-oxononanoate + holo-[ACP] + CO2. It functions in the pathway cofactor biosynthesis; biotin biosynthesis. Functionally, catalyzes the decarboxylative condensation of pimeloyl-[acyl-carrier protein] and L-alanine to produce 8-amino-7-oxononanoate (AON), [acyl-carrier protein], and carbon dioxide. This is Putative 8-amino-7-oxononanoate synthase (bioF) from Neisseria meningitidis serogroup B (strain ATCC BAA-335 / MC58).